We begin with the raw amino-acid sequence, 362 residues long: Ferrochelatase (362 aa).

Fe cation contacts are provided by H228 and E309.

This sequence belongs to the ferrochelatase family.

It is found in the cytoplasm. It carries out the reaction heme b + 2 H(+) = protoporphyrin IX + Fe(2+). The protein operates within porphyrin-containing compound metabolism; protoheme biosynthesis; protoheme from protoporphyrin-IX: step 1/1. Catalyzes the ferrous insertion into protoporphyrin IX. The protein is Ferrochelatase of Bordetella parapertussis (strain 12822 / ATCC BAA-587 / NCTC 13253).